A 140-amino-acid chain; its full sequence is Organic hydroperoxide resistance protein-like (140 aa).

The protein belongs to the OsmC/Ohr family.

The protein is Organic hydroperoxide resistance protein-like of Staphylococcus aureus (strain MSSA476).